A 527-amino-acid polypeptide reads, in one-letter code: Lysine--tRNA ligase (527 aa).

Positions 431 and 438 each coordinate Mg(2+).

The protein belongs to the class-II aminoacyl-tRNA synthetase family. In terms of assembly, homodimer. Mg(2+) serves as cofactor.

The protein resides in the cytoplasm. It catalyses the reaction tRNA(Lys) + L-lysine + ATP = L-lysyl-tRNA(Lys) + AMP + diphosphate. The protein is Lysine--tRNA ligase (lysS) of Chlamydia pneumoniae (Chlamydophila pneumoniae).